Reading from the N-terminus, the 181-residue chain is MSSHRRRVKHFDRKSGPRKALLRGLVTSLIEHGRITTTVDRAKEVRRHVEKAITLGKKGDLSTTRLLLSRFPNKEAVATIMKDLSPRFKTRPGGYTRIIKIGRRPGDTAEMAFLEFVDYDFEAKTADTAEKSEKSAKTAKAAKAPAKKATAKKASTKAVAAKKKAVKKAQKKDRAASAARA.

Residues 129–181 (AEKSEKSAKTAKAAKAPAKKATAKKASTKAVAAKKKAVKKAQKKDRAASAARA) are disordered. The span at 145 to 171 (PAKKATAKKASTKAVAAKKKAVKKAQK) shows a compositional bias: basic residues.

Belongs to the bacterial ribosomal protein bL17 family. In terms of assembly, part of the 50S ribosomal subunit. Contacts protein L32.

The sequence is that of Large ribosomal subunit protein bL17 from Bdellovibrio bacteriovorus (strain ATCC 15356 / DSM 50701 / NCIMB 9529 / HD100).